Here is a 453-residue protein sequence, read N- to C-terminus: Collagen alpha-4(IV) chain (453 aa).

Positions Gly1 to Pro218 are disordered. The tract at residues Gly1–Gly222 is triple-helical region. 3 stretches are compositionally biased toward pro residues: residues Gln26–Pro44, Pro60–Pro72, and Pro95–Pro122. Residues Pro153 to Met162 show a composition bias toward low complexity. Basic and acidic residues predominate over residues Pro174–Asp183. The segment covering Ala206–Asp215 has biased composition (pro residues). The Collagen IV NC1 domain maps to Gly228 to Ser453. Disulfide bonds link Cys243–Cys332, Cys276–Cys329, Cys288–Cys294, Cys351–Cys449, Cys385–Cys446, and Cys397–Cys404.

This sequence belongs to the type IV collagen family. As to quaternary structure, there are six type IV collagen isoforms, alpha 1(IV)-alpha 6(IV), each of which can form a triple helix structure with 2 other chains to generate type IV collagen network. The alpha 3(IV) chain forms a triple helical protomer with alpha 4(IV) and alpha 5(IV); this triple helical structure dimerizes through NC1-NC1 domain interactions such that the alpha 3(IV), alpha 4(IV) and alpha 5(IV) chains of one protomer connect with the alpha 5(IV), alpha 4(IV) and alpha 3(IV) chains of the opposite protomer, respectively. Associates with LAMB2 at the neuromuscular junction and in GBM. Post-translationally, prolines at the third position of the tripeptide repeating unit (G-X-Y) are hydroxylated in some or all of the chains. In terms of processing, type IV collagens contain numerous cysteine residues which are involved in inter- and intramolecular disulfide bonding. 12 of these, located in the NC1 domain, are conserved in all known type IV collagens. The trimeric structure of the NC1 domains is stabilized by covalent bonds between Lys and Met residues. As to expression, alpha 3 and alpha 4 type IV collagens are colocalized and present only in basement membranes of kidney, eye, cochlea, lung and brain.

The protein localises to the secreted. Its subcellular location is the extracellular space. It localises to the extracellular matrix. The protein resides in the basement membrane. In terms of biological role, type IV collagen is the major structural component of glomerular basement membranes (GBM), forming a 'chicken-wire' meshwork together with laminins, proteoglycans and entactin/nidogen. The sequence is that of Collagen alpha-4(IV) chain (COL4A4) from Bos taurus (Bovine).